The chain runs to 373 residues: NAD(P)H-quinone oxidoreductase subunit 1 (373 aa).

A run of 8 helical transmembrane segments spans residues 28 to 48 (LLWL…GVLV), 98 to 118 (LLFT…WLII), 129 to 149 (VGVG…GLLM), 167 to 187 (AAQS…IVMM), 205 to 225 (ILSW…ICAL), 267 to 287 (VLSA…PIPV), 309 to 329 (SVGI…AILL), and 348 to 368 (FLLP…LAFP).

Belongs to the complex I subunit 1 family. In terms of assembly, NDH-1 is composed of at least 11 different subunits.

It is found in the cellular thylakoid membrane. The enzyme catalyses a plastoquinone + NADH + (n+1) H(+)(in) = a plastoquinol + NAD(+) + n H(+)(out). It catalyses the reaction a plastoquinone + NADPH + (n+1) H(+)(in) = a plastoquinol + NADP(+) + n H(+)(out). In terms of biological role, NDH-1 shuttles electrons from an unknown electron donor, via FMN and iron-sulfur (Fe-S) centers, to quinones in the respiratory and/or the photosynthetic chain. The immediate electron acceptor for the enzyme in this species is believed to be plastoquinone. Couples the redox reaction to proton translocation, and thus conserves the redox energy in a proton gradient. The sequence is that of NAD(P)H-quinone oxidoreductase subunit 1 from Parasynechococcus marenigrum (strain WH8102).